The sequence spans 121 residues: Outer membrane lipoprotein BBA14 (121 aa).

The first 19 residues, 1-19 (MQIKNFPFLFLLNSLIIFS), serve as a signal peptide directing secretion. Residue cysteine 20 is the site of N-palmitoyl cysteine attachment. Cysteine 20 carries the S-diacylglycerol cysteine lipid modification.

The protein resides in the cell outer membrane. Outer membrane lipoprotein that could act as a component of a potential toxin-antitoxin system in B.burgdorferi which could serve as a plasmid stabilization mechanism in a growing bacterial population. The sequence is that of Outer membrane lipoprotein BBA14 from Borreliella burgdorferi (strain ATCC 35210 / DSM 4680 / CIP 102532 / B31) (Borrelia burgdorferi).